Here is a 109-residue protein sequence, read N- to C-terminus: Large ribosomal subunit protein uL22 (109 aa).

Belongs to the universal ribosomal protein uL22 family. As to quaternary structure, part of the 50S ribosomal subunit.

This protein binds specifically to 23S rRNA; its binding is stimulated by other ribosomal proteins, e.g. L4, L17, and L20. It is important during the early stages of 50S assembly. It makes multiple contacts with different domains of the 23S rRNA in the assembled 50S subunit and ribosome. In terms of biological role, the globular domain of the protein is located near the polypeptide exit tunnel on the outside of the subunit, while an extended beta-hairpin is found that lines the wall of the exit tunnel in the center of the 70S ribosome. This Polaromonas naphthalenivorans (strain CJ2) protein is Large ribosomal subunit protein uL22.